The sequence spans 415 residues: Very late expression factor 1 (415 aa).

The 187-residue stretch at 171–357 (REIINTILDC…DESDDNDEDD (187 aa)) folds into the Tyr recombinase domain. Catalysis depends on residues R214, K242, R307, and H330. Residues 339 to 415 (YLNKYDVGVD…GDDADLLSFN (77 aa)) form a disordered region. The active-site O-(3'-phospho-DNA)-tyrosine intermediate is the Y343. Residues 346 to 363 (GVDESDDNDEDDDDDEND) are compositionally biased toward acidic residues. Residues 375-404 (NISNYDINNSSSGNSSSNNTSGNDFNNNIS) show a composition bias toward low complexity.

Belongs to the 'phage' integrase family.

Its function is as follows. Involved in very late gene activation. The chain is Very late expression factor 1 (VLF-1) from Heliothis zea nuclear polyhedrosis virus (HzSNPV).